The primary structure comprises 629 residues: tRNA uridine 5-carboxymethylaminomethyl modification enzyme MnmG (629 aa).

13 to 18 lines the FAD pocket; the sequence is GGGHAG. Residue 273–287 participates in NAD(+) binding; it reads GPRYCPSIEDKIVRF.

This sequence belongs to the MnmG family. In terms of assembly, homodimer. Heterotetramer of two MnmE and two MnmG subunits. It depends on FAD as a cofactor.

It localises to the cytoplasm. In terms of biological role, NAD-binding protein involved in the addition of a carboxymethylaminomethyl (cmnm) group at the wobble position (U34) of certain tRNAs, forming tRNA-cmnm(5)s(2)U34. The sequence is that of tRNA uridine 5-carboxymethylaminomethyl modification enzyme MnmG from Pseudoalteromonas translucida (strain TAC 125).